A 681-amino-acid chain; its full sequence is DNA ligase (681 aa).

Residues 34–38 (DEEYD), 83–84 (SL), and E112 each bind NAD(+). K114 acts as the N6-AMP-lysine intermediate in catalysis. The NAD(+) site is built by R135, E169, K285, and K309. Positions 403, 406, 422, and 427 each coordinate Zn(2+). The BRCT domain occupies 584-673 (TTSNILDGLT…GVELKESWKK (90 aa)).

Belongs to the NAD-dependent DNA ligase family. LigA subfamily. Mg(2+) serves as cofactor. Mn(2+) is required as a cofactor.

The enzyme catalyses NAD(+) + (deoxyribonucleotide)n-3'-hydroxyl + 5'-phospho-(deoxyribonucleotide)m = (deoxyribonucleotide)n+m + AMP + beta-nicotinamide D-nucleotide.. In terms of biological role, DNA ligase that catalyzes the formation of phosphodiester linkages between 5'-phosphoryl and 3'-hydroxyl groups in double-stranded DNA using NAD as a coenzyme and as the energy source for the reaction. It is essential for DNA replication and repair of damaged DNA. The sequence is that of DNA ligase from Fervidobacterium nodosum (strain ATCC 35602 / DSM 5306 / Rt17-B1).